The following is a 178-amino-acid chain: Interleukin-10 (178 aa).

An N-terminal signal peptide occupies residues methionine 1–alanine 18. 2 disulfides stabilise this stretch: cysteine 30-cysteine 126 and cysteine 80-cysteine 132. An N-linked (GlcNAc...) asparagine glycan is attached at asparagine 134.

It belongs to the IL-10 family. As to quaternary structure, homodimer. Interacts with IL10RA and IL10RB.

The protein resides in the secreted. Its function is as follows. Major immune regulatory cytokine that acts on many cells of the immune system where it has profound anti-inflammatory functions, limiting excessive tissue disruption caused by inflammation. Mechanistically, IL10 binds to its heterotetrameric receptor comprising IL10RA and IL10RB leading to JAK1 and STAT2-mediated phosphorylation of STAT3. In turn, STAT3 translocates to the nucleus where it drives expression of anti-inflammatory mediators. Targets antigen-presenting cells (APCs) such as macrophages and monocytes and inhibits their release of pro-inflammatory cytokines including granulocyte-macrophage colony-stimulating factor /GM-CSF, granulocyte colony-stimulating factor/G-CSF, IL-1 alpha, IL-1 beta, IL-6, IL-8 and TNF-alpha. Also interferes with antigen presentation by reducing the expression of MHC-class II and co-stimulatory molecules, thereby inhibiting their ability to induce T cell activation. In addition, controls the inflammatory response of macrophages by reprogramming essential metabolic pathways including mTOR signaling. This Macaca mulatta (Rhesus macaque) protein is Interleukin-10 (IL10).